The primary structure comprises 260 residues: Aspartate/glutamate leucyltransferase (260 aa).

Positions aspartate 241 to proline 251 are enriched in basic and acidic residues. The tract at residues aspartate 241 to glutamate 260 is disordered.

It belongs to the R-transferase family. Bpt subfamily.

It localises to the cytoplasm. It carries out the reaction N-terminal L-glutamyl-[protein] + L-leucyl-tRNA(Leu) = N-terminal L-leucyl-L-glutamyl-[protein] + tRNA(Leu) + H(+). The enzyme catalyses N-terminal L-aspartyl-[protein] + L-leucyl-tRNA(Leu) = N-terminal L-leucyl-L-aspartyl-[protein] + tRNA(Leu) + H(+). In terms of biological role, functions in the N-end rule pathway of protein degradation where it conjugates Leu from its aminoacyl-tRNA to the N-termini of proteins containing an N-terminal aspartate or glutamate. This chain is Aspartate/glutamate leucyltransferase, found in Gluconacetobacter diazotrophicus (strain ATCC 49037 / DSM 5601 / CCUG 37298 / CIP 103539 / LMG 7603 / PAl5).